Consider the following 48-residue polypeptide: Cytochrome c oxidase subunit 2 (48 aa).

Residues 1–14 lie on the Mitochondrial intermembrane side of the membrane; the sequence is MAHPAQLGLQDASS. A helical membrane pass occupies residues 15-45; it reads PIXEELLHFHEDALMIVFLISTLVLYIITTT. The Mitochondrial matrix segment spans residues 46–48; the sequence is VST.

Belongs to the cytochrome c oxidase subunit 2 family. In terms of assembly, component of the cytochrome c oxidase (complex IV, CIV), a multisubunit enzyme composed of 14 subunits. The complex is composed of a catalytic core of 3 subunits MT-CO1, MT-CO2 and MT-CO3, encoded in the mitochondrial DNA, and 11 supernumerary subunits COX4I, COX5A, COX5B, COX6A, COX6B, COX6C, COX7A, COX7B, COX7C, COX8 and NDUFA4, which are encoded in the nuclear genome. The complex exists as a monomer or a dimer and forms supercomplexes (SCs) in the inner mitochondrial membrane with NADH-ubiquinone oxidoreductase (complex I, CI) and ubiquinol-cytochrome c oxidoreductase (cytochrome b-c1 complex, complex III, CIII), resulting in different assemblies (supercomplex SCI(1)III(2)IV(1) and megacomplex MCI(2)III(2)IV(2)). Found in a complex with TMEM177, COA6, COX18, COX20, SCO1 and SCO2. Interacts with TMEM177 in a COX20-dependent manner. Interacts with COX20. Interacts with COX16. Cu cation is required as a cofactor.

Its subcellular location is the mitochondrion inner membrane. It carries out the reaction 4 Fe(II)-[cytochrome c] + O2 + 8 H(+)(in) = 4 Fe(III)-[cytochrome c] + 2 H2O + 4 H(+)(out). Functionally, component of the cytochrome c oxidase, the last enzyme in the mitochondrial electron transport chain which drives oxidative phosphorylation. The respiratory chain contains 3 multisubunit complexes succinate dehydrogenase (complex II, CII), ubiquinol-cytochrome c oxidoreductase (cytochrome b-c1 complex, complex III, CIII) and cytochrome c oxidase (complex IV, CIV), that cooperate to transfer electrons derived from NADH and succinate to molecular oxygen, creating an electrochemical gradient over the inner membrane that drives transmembrane transport and the ATP synthase. Cytochrome c oxidase is the component of the respiratory chain that catalyzes the reduction of oxygen to water. Electrons originating from reduced cytochrome c in the intermembrane space (IMS) are transferred via the dinuclear copper A center (CU(A)) of subunit 2 and heme A of subunit 1 to the active site in subunit 1, a binuclear center (BNC) formed by heme A3 and copper B (CU(B)). The BNC reduces molecular oxygen to 2 water molecules using 4 electrons from cytochrome c in the IMS and 4 protons from the mitochondrial matrix. In Polypterus sp. (Bichir), this protein is Cytochrome c oxidase subunit 2 (mt-co2).